A 387-amino-acid chain; its full sequence is Succinate--CoA ligase [ADP-forming] subunit beta (387 aa).

One can recognise an ATP-grasp domain in the interval 9 to 244; that stretch reads KQLFASYGLP…VSQEDDRENR (236 aa). Residues Lys-46, 53-55, Glu-99, Cys-102, and Glu-107 contribute to the ATP site; that span reads GRG. Positions 199 and 213 each coordinate Mg(2+). Residues Asn-264 and 321-323 each bind substrate; that span reads GIV.

The protein belongs to the succinate/malate CoA ligase beta subunit family. As to quaternary structure, heterotetramer of two alpha and two beta subunits. Mg(2+) serves as cofactor.

The enzyme catalyses succinate + ATP + CoA = succinyl-CoA + ADP + phosphate. It catalyses the reaction GTP + succinate + CoA = succinyl-CoA + GDP + phosphate. It participates in carbohydrate metabolism; tricarboxylic acid cycle; succinate from succinyl-CoA (ligase route): step 1/1. Functionally, succinyl-CoA synthetase functions in the citric acid cycle (TCA), coupling the hydrolysis of succinyl-CoA to the synthesis of either ATP or GTP and thus represents the only step of substrate-level phosphorylation in the TCA. The beta subunit provides nucleotide specificity of the enzyme and binds the substrate succinate, while the binding sites for coenzyme A and phosphate are found in the alpha subunit. This Legionella pneumophila (strain Corby) protein is Succinate--CoA ligase [ADP-forming] subunit beta.